Here is a 557-residue protein sequence, read N- to C-terminus: ABC1 family protein MCP2 homolog (557 aa).

Residues 1–33 constitute a mitochondrion transit peptide; it reads MFSRFSWPRITRCFRSYPKKKSSCISFTHHARE. The Mitochondrial matrix segment spans residues 34–39; that stretch reads HTNFKK. A helical membrane pass occupies residues 40–56; the sequence is PAVVGASITLMASVALV. Topologically, residues 57–557 are mitochondrial intermembrane; the sequence is DFDPVKHAGV…NYFYYKHMYL (501 aa).

It belongs to the protein kinase superfamily. ADCK protein kinase family.

The protein localises to the mitochondrion inner membrane. Involved in mitochondrial lipid homeostasis. This Schizosaccharomyces pombe (strain 972 / ATCC 24843) (Fission yeast) protein is ABC1 family protein MCP2 homolog.